The sequence spans 282 residues: Halorhodopsin (282 aa).

Topologically, residues 1 to 29 are extracellular; it reads MMETAADALASGTVPLEMTQTQIFEAIQG. Residues 30-55 form a helical membrane-spanning segment; it reads DTLLASSLWINIALAGLSILLFVYMG. Over 56–61 the chain is Cytoplasmic; sequence RNLEDP. A helical membrane pass occupies residues 62 to 85; the sequence is RAQLIFVATLMVPLVSISSYTGLV. Topologically, residues 86-109 are extracellular; the sequence is SGLTVSFLEMPAGHALAGQEVLTP. The helical transmembrane segment at 110–131 threads the bilayer; sequence WGRYLTWALSTPMILVALGLLA. The Cytoplasmic segment spans residues 132–134; sequence GSN. A helical transmembrane segment spans residues 135–158; sequence ATKLFTAVTADIGMCVTGLAAALT. The Extracellular portion of the chain corresponds to 159 to 161; that stretch reads TSS. The chain crosses the membrane as a helical span at residues 162 to 184; that stretch reads YLLRWVWYVISCAFFVVVLYVLL. Over 185–196 the chain is Cytoplasmic; it reads AEWAEDAEVAGT. The chain crosses the membrane as a helical span at residues 197 to 220; sequence AEIFNTLKLLTVVLWLGYPIFWAL. Residues 221-229 are Extracellular-facing; sequence GAEGLAVLD. A helical transmembrane segment spans residues 230–258; it reads VAVTSWAYSGMDIVAKYLFAFLLLRWVVD. K245 bears the N6-(retinylidene)lysine mark. Residues 259–282 are Cytoplasmic-facing; it reads NERTVAGMAAGLGAPLARCAPADD.

Belongs to the archaeal/bacterial/fungal opsin family.

It is found in the cell membrane. Functionally, light-driven chloride pump. The chain is Halorhodopsin (hop) from Halorubrum sodomense.